The following is a 692-amino-acid chain: Elongation factor G (692 aa).

Residues 8 to 283 enclose the tr-type G domain; it reads NRIRNIGIAA…AVIDYLPAPT (276 aa). GTP-binding positions include 17–24, 81–85, and 135–138; these read AHIDAGKT, DTPGH, and NKMD.

It belongs to the TRAFAC class translation factor GTPase superfamily. Classic translation factor GTPase family. EF-G/EF-2 subfamily.

The protein localises to the cytoplasm. Its function is as follows. Catalyzes the GTP-dependent ribosomal translocation step during translation elongation. During this step, the ribosome changes from the pre-translocational (PRE) to the post-translocational (POST) state as the newly formed A-site-bound peptidyl-tRNA and P-site-bound deacylated tRNA move to the P and E sites, respectively. Catalyzes the coordinated movement of the two tRNA molecules, the mRNA and conformational changes in the ribosome. The sequence is that of Elongation factor G from Helicobacter acinonychis (strain Sheeba).